A 307-amino-acid chain; its full sequence is D-alanine--D-alanine ligase (307 aa).

Residues 101–301 (KDVLRAAGVP…FGELVRWMVE (201 aa)) form the ATP-grasp domain. 128–182 (MTPPYVVKPLGEGSSFGVIIVRADQTHPPQELTRDDWAYGDLVLVERFVAGRELT) provides a ligand contact to ATP. Residues Asp-251, Glu-268, and Asn-270 each contribute to the Mg(2+) site.

Belongs to the D-alanine--D-alanine ligase family. It depends on Mg(2+) as a cofactor. Mn(2+) is required as a cofactor.

The protein localises to the cytoplasm. The catalysed reaction is 2 D-alanine + ATP = D-alanyl-D-alanine + ADP + phosphate + H(+). The protein operates within cell wall biogenesis; peptidoglycan biosynthesis. Cell wall formation. The sequence is that of D-alanine--D-alanine ligase from Methylocella silvestris (strain DSM 15510 / CIP 108128 / LMG 27833 / NCIMB 13906 / BL2).